Consider the following 173-residue polypeptide: Trafficking regulator of GLUT4 1 (173 aa).

The span at 1–17 (MANPVQPQLQDPGSTSP) shows a compositional bias: polar residues. The interval 1-22 (MANPVQPQLQDPGSTSPLDLPE) is disordered. Residues 1–102 (MANPVQPQLQ…QDQEAPKDYL (102 aa)) are Cytoplasmic-facing. Phosphoserine occurs at positions 16, 43, 45, 70, 84, and 85. The segment at residues 103 to 123 (VLAIASCFCPVWPLNLIPLIF) is an intramembrane region (helical). The Cytoplasmic portion of the chain corresponds to 124-150 (SIMSRSSVQQGDLDGARRLGRLARLLS). The helical transmembrane segment at 151-171 (ITFIILGIVIIIVAVTVNFTV) threads the bilayer. Over 172–173 (PK) the chain is Extracellular.

Belongs to the CD225/Dispanin family. As to quaternary structure, interacts with SLC2A4; the interaction is required for proper SLC2A4 reacycling after insulin stimulation. As to expression, present in adipose tissue and undetectable in other tissues (at protein level).

The protein resides in the cell membrane. The protein localises to the endomembrane system. It is found in the cytoplasm. Its subcellular location is the perinuclear region. Functionally, regulates insulin-mediated adipose tissue glucose uptake and transport by modulation of SLC2A4 recycling. Not required for SLC2A4 membrane fusion upon an initial stimulus, but rather is necessary for proper protein recycling during prolonged insulin stimulation. This is Trafficking regulator of GLUT4 1 from Rattus norvegicus (Rat).